The following is a 43-amino-acid chain: Protein PsbN (43 aa).

A helical membrane pass occupies residues 7-27 (FVVGILVALVLITAFAVYTAF).

It belongs to the PsbN family.

The protein resides in the cell inner membrane. Functionally, may play a role in photosystem I and II biogenesis. This Gloeobacter violaceus (strain ATCC 29082 / PCC 7421) protein is Protein PsbN.